We begin with the raw amino-acid sequence, 139 residues long: Large-conductance mechanosensitive channel (139 aa).

The next 2 membrane-spanning stretches (helical) occupy residues 9 to 29 (AFAV…GAAF) and 79 to 99 (IQTV…VKAI).

The protein belongs to the MscL family. As to quaternary structure, homopentamer.

The protein localises to the cell inner membrane. In terms of biological role, channel that opens in response to stretch forces in the membrane lipid bilayer. May participate in the regulation of osmotic pressure changes within the cell. The chain is Large-conductance mechanosensitive channel from Pseudomonas putida (strain W619).